The chain runs to 271 residues: MYNYFYQGHLVRKCLGQHFLHDQNIIESIVAVIHPLPSQALVEIGPGLGALTKYVAKYVKTITVIELDHNLVAYLANHPILQHKLNILSQDVMKVNFSDLAKKLSQPLRIFGNLPYNISIALMFNLFRHIHMIRDMHFMLQKEVVSRLLAKPNNKNYGKLSVIAQHYCQIDLVLDVPPESFRPVPQVDSAVVRLVPYVIPPYPVKDINKLYLLTSLAFQQRRKTIRNSLRNLFSVEQLLTQGIISTLRAENLSVEQYCCLASTLAECLPKK.

Residues His18, Leu20, Gly45, Glu66, Asp91, and Asn113 each contribute to the S-adenosyl-L-methionine site.

It belongs to the class I-like SAM-binding methyltransferase superfamily. rRNA adenine N(6)-methyltransferase family. RsmA subfamily.

It localises to the cytoplasm. It carries out the reaction adenosine(1518)/adenosine(1519) in 16S rRNA + 4 S-adenosyl-L-methionine = N(6)-dimethyladenosine(1518)/N(6)-dimethyladenosine(1519) in 16S rRNA + 4 S-adenosyl-L-homocysteine + 4 H(+). Its function is as follows. Specifically dimethylates two adjacent adenosines (A1518 and A1519) in the loop of a conserved hairpin near the 3'-end of 16S rRNA in the 30S particle. May play a critical role in biogenesis of 30S subunits. The chain is Ribosomal RNA small subunit methyltransferase A from Baumannia cicadellinicola subsp. Homalodisca coagulata.